The chain runs to 166 residues: Nucleotide-binding protein CV_2047 (166 aa).

This sequence belongs to the YajQ family.

Functionally, nucleotide-binding protein. The polypeptide is Nucleotide-binding protein CV_2047 (Chromobacterium violaceum (strain ATCC 12472 / DSM 30191 / JCM 1249 / CCUG 213 / NBRC 12614 / NCIMB 9131 / NCTC 9757 / MK)).